A 38-amino-acid chain; its full sequence is Photosystem II reaction center protein L (38 aa).

Residues 17–37 form a helical membrane-spanning segment; it reads SLYWGLLLIFVLAVLFSSYIF.

This sequence belongs to the PsbL family. PSII is composed of 1 copy each of membrane proteins PsbA, PsbB, PsbC, PsbD, PsbE, PsbF, PsbH, PsbI, PsbJ, PsbK, PsbL, PsbM, PsbT, PsbX, PsbY, PsbZ, Psb30/Ycf12, at least 3 peripheral proteins of the oxygen-evolving complex and a large number of cofactors. It forms dimeric complexes.

It is found in the plastid. It localises to the chloroplast thylakoid membrane. In terms of biological role, one of the components of the core complex of photosystem II (PSII). PSII is a light-driven water:plastoquinone oxidoreductase that uses light energy to abstract electrons from H(2)O, generating O(2) and a proton gradient subsequently used for ATP formation. It consists of a core antenna complex that captures photons, and an electron transfer chain that converts photonic excitation into a charge separation. This subunit is found at the monomer-monomer interface and is required for correct PSII assembly and/or dimerization. The chain is Photosystem II reaction center protein L from Oltmannsiellopsis viridis (Marine flagellate).